Reading from the N-terminus, the 248-residue chain is Probable proteasome subunit alpha type-3 (248 aa).

This sequence belongs to the peptidase T1A family. As to quaternary structure, the 26S proteasome consists of a 20S proteasome core and two 19S regulatory subunits. The 20S proteasome core is composed of 28 subunits that are arranged in four stacked rings, resulting in a barrel-shaped structure. The two end rings are each formed by seven alpha subunits, and the two central rings are each formed by seven beta subunits. The catalytic chamber with the active sites is on the inside of the barrel.

The protein localises to the cytoplasm. It is found in the nucleus. Functionally, the proteasome is a multicatalytic proteinase complex which is characterized by its ability to cleave peptides with Arg, Phe, Tyr, Leu, and Glu adjacent to the leaving group at neutral or slightly basic pH. The proteasome has an ATP-dependent proteolytic activity. The protein is Probable proteasome subunit alpha type-3 of Schizosaccharomyces pombe (strain 972 / ATCC 24843) (Fission yeast).